We begin with the raw amino-acid sequence, 721 residues long: MNKLTIIVTYYNAEEYITGCLESIKQQRTQDFNLIIVNDGSTDQSKKLMDEAIKDYDKNIRFIDLDENSGHAHARNIALEEVETPYFMFLDADDELASYAITFYLEKFNNTDGLIAPIHSFTTQRPQFVDLDRVRVEYFNAKENINSFLRKQSACNIIFRTAIVRAHHIRFNENLNTYVDWSFVLEYMKYVNKFVRIFNFPFYFRGEVYDPFETLTLSEQNFDILFKDYVNSFYDAIKRATNPKVREFIVTKMGNKIANEFEPTRYDINERYQTHKDTLVELSKFLHVHLVKNQKLINKIETILLMNNETDKAFKVNQFRKTLRHVKNIVLRRKNKERSLYDLTDKEDNVKPKTIVFESFGGKNYSDSPKYIYEYMQKYYPNYRYIWSFKNPDKNVVPGSAEKVKRNSAEYYQAYSEASHWVSNARTPLYLNKKENQTYIQTWHGTPLKRLANDMKVVRMPGTTTPKYKRNFNRETSRWDYLISPNRYSTEIFRSAFWMDEERILEIGYPRNDVLVNRANDQEYLDEIRTHLNLPSDKKVIMYAPTWRDDEFVSKGKYLFELKIDLDNLYKELGDDYVILLRMHYLISNALDLSGYENFAIDVSNYNDVSELFLISDCLITDYSSVMFDYGILKRPQFFFAYDIDKYDKGLRGFYMNYMEDLPGPIYTEPYGLAKELKNLDKVQQQYQEKIDAFYDRFCSVDNGKASQYIGDLIHKDIKEQ.

Residues 443–447 (WHGTP), Arg511, 545–546 (PT), 582–584 (RMH), 624–625 (SS), and Asp629 contribute to the CDP-glycerol site.

This sequence belongs to the CDP-glycerol glycerophosphotransferase family.

The protein localises to the cell membrane. The catalysed reaction is 4-O-[(2R)-glycerylphospho]-N-acetyl-beta-D-mannosaminyl-(1-&gt;4)-N-acetyl-alpha-D-glucosaminyl di-trans,octa-cis-undecaprenyl diphosphate + n CDP-glycerol = 4-O-{[(2R)-1-glycerylphospho](n)-(2R)-1-glycerylphospho}-N-acetyl-beta-D-mannosaminyl-(1-&gt;4)-N-acetyl-alpha-D-glucosaminyl undecaprenyl diphosphate + n CMP + n H(+). It functions in the pathway cell wall biogenesis; poly(glycerol phosphate) teichoic acid biosynthesis. Its function is as follows. Responsible for the polymerization of the main chain of the major teichoic acid by sequential transfer of glycerol phosphate units from CDP-glycerol to the disaccharide linkage unit. Synthesizes polymers of approximately 35 glycerol phosphate units in length. The polypeptide is Teichoic acid poly(glycerol phosphate) polymerase (Staphylococcus epidermidis (strain ATCC 35984 / DSM 28319 / BCRC 17069 / CCUG 31568 / BM 3577 / RP62A)).